The primary structure comprises 375 residues: Heat shock protein 42 (375 aa).

Disordered stretches follow at residues 21–59, 81–127, 154–238, and 347–375; these read TGQR…HPLY, SPEY…YYHC, PYEG…ETRM, and PKPK…TVEN. Over residues 22–48 the composition is skewed to low complexity; the sequence is GQRGQQGYPRQPQRPQRYHPHYGQVHV. Positions 49 to 58 are enriched in basic residues; it reads GGHHPRHHPL. 2 stretches are compositionally biased toward acidic residues: residues 85–101 and 158–168; these read GYDD…EDMV and TEPEIEANTEQ. Residues 169–197 show a composition bias toward basic and acidic residues; it reads EGEKGEEKDKKDKSEAPKEEAGETNKEKP. A phosphoserine mark is found at Ser182, Ser213, Ser214, Ser215, and Ser223. In terms of domain architecture, sHSP spans 237 to 356; it reads RMDLPFSPEV…PKPKKRIAIE (120 aa). A compositionally biased stretch (acidic residues) spans 357–367; sequence EIPDEELEFEE.

The protein belongs to the small heat shock protein (HSP20) family. As to quaternary structure, forms oligomeric complexes. Interacts with itself.

In Saccharomyces cerevisiae (strain ATCC 204508 / S288c) (Baker's yeast), this protein is Heat shock protein 42 (HSP42).